The primary structure comprises 79 residues: Major outer membrane lipoprotein Lpp 2 (79 aa).

Positions 1 to 21 (MNRTNQLILGAVVLGSTLLAG) are cleaved as a signal peptide. Cys22 is lipidated: N-palmitoyl cysteine. Cys22 carries S-diacylglycerol cysteine lipidation. 2 repeats span residues 25 to 35 (NAKIDQLSSDV) and 39 to 49 (SAKVEQLSNDV). A coiled-coil region spans residues 28 to 69 (IDQLSSDVQTLSAKVEQLSNDVNAMRSDVQAAKDDAARANQR). Lys79 bears the N6-murein peptidoglycan lysine mark.

It belongs to the Lpp family. As to quaternary structure, homotrimer.

The protein localises to the cell outer membrane. It is found in the secreted. Its subcellular location is the cell wall. Functionally, plays an important role in virulence. A highly abundant outer membrane lipoprotein that controls the distance between the inner and outer membranes. The only protein known to be covalently linked to the peptidoglycan network (PGN). Also non-covalently binds the PGN. The link between the cell outer membrane and PGN contributes to maintenance of the structural and functional integrity of the cell envelope, and maintains the correct distance between the PGN and the outer membrane. This is Major outer membrane lipoprotein Lpp 2 from Salmonella typhimurium (strain LT2 / SGSC1412 / ATCC 700720).